A 317-amino-acid chain; its full sequence is Methionyl-tRNA formyltransferase (317 aa).

112 to 115 contacts (6S)-5,6,7,8-tetrahydrofolate; that stretch reads SLLP.

It belongs to the Fmt family.

It catalyses the reaction L-methionyl-tRNA(fMet) + (6R)-10-formyltetrahydrofolate = N-formyl-L-methionyl-tRNA(fMet) + (6S)-5,6,7,8-tetrahydrofolate + H(+). Functionally, attaches a formyl group to the free amino group of methionyl-tRNA(fMet). The formyl group appears to play a dual role in the initiator identity of N-formylmethionyl-tRNA by promoting its recognition by IF2 and preventing the misappropriation of this tRNA by the elongation apparatus. The protein is Methionyl-tRNA formyltransferase of Mycoplasma mycoides subsp. mycoides SC (strain CCUG 32753 / NCTC 10114 / PG1).